The primary structure comprises 352 residues: MGESEKISVGIIGASGYGGVQLVRLLQEHPLVDIVYLGGKGSAGQTYAEIYPHLGHAVDLTIEPIDTEAIASRCQVVFLGLPNGLACDIAPPLIAKGCKVLDLSADYRFKNLETYSSWYNKDRSDLDTAKTAVYGLPELYREEIKSASLIGCPGCYPTASLMALSPLLKQGLILPETTIIDAKSGTSGGGRQAKTHLLLAEAEGSFGAYGVAKHRHTPEIEQISSDLAGHEVKVQFTPHLIPMVRGILSTVYATLRDPGLVREDLLTIYSAFYRSSPFVKILPNGLYPQTKWACGTNLCYLGIETDPRTDRVIVLSAIDNLIKGQAGQAVQCLNIMMGWEETLGLPQLCFYP.

Cys-155 is a catalytic residue.

Belongs to the NAGSA dehydrogenase family. Type 1 subfamily.

The protein localises to the cytoplasm. It catalyses the reaction N-acetyl-L-glutamate 5-semialdehyde + phosphate + NADP(+) = N-acetyl-L-glutamyl 5-phosphate + NADPH + H(+). It participates in amino-acid biosynthesis; L-arginine biosynthesis; N(2)-acetyl-L-ornithine from L-glutamate: step 3/4. In terms of biological role, catalyzes the NADPH-dependent reduction of N-acetyl-5-glutamyl phosphate to yield N-acetyl-L-glutamate 5-semialdehyde. This is N-acetyl-gamma-glutamyl-phosphate reductase from Crocosphaera subtropica (strain ATCC 51142 / BH68) (Cyanothece sp. (strain ATCC 51142)).